We begin with the raw amino-acid sequence, 443 residues long: Glucose-6-phosphate isomerase (443 aa).

The active-site Proton donor is the Glu-285. Catalysis depends on residues His-306 and Lys-420.

Belongs to the GPI family.

Its subcellular location is the cytoplasm. The catalysed reaction is alpha-D-glucose 6-phosphate = beta-D-fructose 6-phosphate. It functions in the pathway carbohydrate biosynthesis; gluconeogenesis. Its pathway is carbohydrate degradation; glycolysis; D-glyceraldehyde 3-phosphate and glycerone phosphate from D-glucose: step 2/4. Catalyzes the reversible isomerization of glucose-6-phosphate to fructose-6-phosphate. The protein is Glucose-6-phosphate isomerase of Staphylococcus epidermidis (strain ATCC 12228 / FDA PCI 1200).